Here is a 1097-residue protein sequence, read N- to C-terminus: DNA-directed RNA polymerase subunit beta (1097 aa).

The tract at residues 1070-1097 (LMQDVNPRRNTPSRPTYESLGTSEYEED) is disordered. Positions 1077 to 1091 (RRNTPSRPTYESLGT) are enriched in polar residues.

The protein belongs to the RNA polymerase beta chain family. In cyanobacteria the RNAP catalytic core is composed of 2 alpha, 1 beta, 1 beta', 1 gamma and 1 omega subunit. When a sigma factor is associated with the core the holoenzyme is formed, which can initiate transcription.

It carries out the reaction RNA(n) + a ribonucleoside 5'-triphosphate = RNA(n+1) + diphosphate. Its function is as follows. DNA-dependent RNA polymerase catalyzes the transcription of DNA into RNA using the four ribonucleoside triphosphates as substrates. This Prochlorococcus marinus (strain MIT 9515) protein is DNA-directed RNA polymerase subunit beta.